Reading from the N-terminus, the 146-residue chain is 3-hydroxyacyl-[acyl-carrier-protein] dehydratase FabZ (146 aa).

The active site involves H49.

The protein belongs to the thioester dehydratase family. FabZ subfamily.

It is found in the cytoplasm. It catalyses the reaction a (3R)-hydroxyacyl-[ACP] = a (2E)-enoyl-[ACP] + H2O. Involved in unsaturated fatty acids biosynthesis. Catalyzes the dehydration of short chain beta-hydroxyacyl-ACPs and long chain saturated and unsaturated beta-hydroxyacyl-ACPs. The polypeptide is 3-hydroxyacyl-[acyl-carrier-protein] dehydratase FabZ (Pseudomonas fluorescens (strain Pf0-1)).